The chain runs to 329 residues: Ribosomal RNA small subunit methyltransferase H (329 aa).

S-adenosyl-L-methionine contacts are provided by residues 39–41, D57, F84, D100, and Q107; that span reads GGY. The segment at 285-305 is disordered; it reads GPDKDELAQNPRSRSALLRVG.

This sequence belongs to the methyltransferase superfamily. RsmH family.

It localises to the cytoplasm. The catalysed reaction is cytidine(1402) in 16S rRNA + S-adenosyl-L-methionine = N(4)-methylcytidine(1402) in 16S rRNA + S-adenosyl-L-homocysteine + H(+). In terms of biological role, specifically methylates the N4 position of cytidine in position 1402 (C1402) of 16S rRNA. The chain is Ribosomal RNA small subunit methyltransferase H from Ruegeria sp. (strain TM1040) (Silicibacter sp.).